Reading from the N-terminus, the 237-residue chain is ATP-dependent dethiobiotin synthetase BioD (237 aa).

Position 12-17 (12-17 (DAGKTL)) interacts with ATP. A Mg(2+)-binding site is contributed by Thr-16. The active site involves Lys-37. Ser-41 contributes to the substrate binding site. ATP is bound by residues Asp-54, 116–119 (EGAG), and 213–215 (PRL). Mg(2+) contacts are provided by Asp-54 and Glu-116.

This sequence belongs to the dethiobiotin synthetase family. As to quaternary structure, homodimer. It depends on Mg(2+) as a cofactor.

It localises to the cytoplasm. It catalyses the reaction (7R,8S)-7,8-diammoniononanoate + CO2 + ATP = (4R,5S)-dethiobiotin + ADP + phosphate + 3 H(+). It functions in the pathway cofactor biosynthesis; biotin biosynthesis; biotin from 7,8-diaminononanoate: step 1/2. Its function is as follows. Catalyzes a mechanistically unusual reaction, the ATP-dependent insertion of CO2 between the N7 and N8 nitrogen atoms of 7,8-diaminopelargonic acid (DAPA, also called 7,8-diammoniononanoate) to form a ureido ring. This chain is ATP-dependent dethiobiotin synthetase BioD, found in Chromohalobacter salexigens (strain ATCC BAA-138 / DSM 3043 / CIP 106854 / NCIMB 13768 / 1H11).